The following is a 94-amino-acid chain: Integration host factor subunit beta (94 aa).

Belongs to the bacterial histone-like protein family. In terms of assembly, heterodimer of an alpha and a beta chain.

This protein is one of the two subunits of integration host factor, a specific DNA-binding protein that functions in genetic recombination as well as in transcriptional and translational control. This chain is Integration host factor subunit beta, found in Azoarcus sp. (strain BH72).